The following is a 380-amino-acid chain: Flap endonuclease 1 (380 aa).

The N-domain stretch occupies residues 1–104 (MGIQGLAKLI…GELAKRSERR (104 aa)). Arg19 carries the post-translational modification Symmetric dimethylarginine; by PRMT5. Asp34 is a binding site for Mg(2+). DNA is bound by residues Arg47 and Arg70. Position 80 is an N6-acetyllysine (Lys80). Residue Asp86 coordinates Mg(2+). Symmetric dimethylarginine; by PRMT5 occurs at positions 100 and 104. Positions 122 to 253 (EVEKFTKRLV…KRAVDLIQKH (132 aa)) are I-domain. Positions 158, 160, 179, and 181 each coordinate Mg(2+). Glu158 contributes to the DNA binding site. Ser187 carries the post-translational modification Phosphoserine; by CDK2. The residue at position 192 (Arg192) is a Symmetric dimethylarginine; by PRMT5. Ser197 carries the phosphoserine modification. DNA contacts are provided by Gly231 and Asp233. Asp233 lines the Mg(2+) pocket. A phosphoserine mark is found at Ser255, Ser293, and Ser335. Residues 327 to 380 (RLSKSRQGSTQGRLDDFFKVTGSLSSAKRKEPEPKGSTKKKAKTGAAGKFKRGK) form a disordered region. Phosphothreonine is present on Thr336. The tract at residues 336-344 (TQGRLDDFF) is interaction with PCNA. At Lys354 the chain carries N6-acetyllysine. Residues 363 to 380 (STKKKAKTGAAGKFKRGK) are compositionally biased toward basic residues. The residue at position 364 (Thr364) is a Phosphothreonine. An N6-acetyllysine mark is found at Lys375, Lys377, and Lys380.

Belongs to the XPG/RAD2 endonuclease family. FEN1 subfamily. As to quaternary structure, interacts with PCNA. Three molecules of FEN1 bind to one PCNA trimer with each molecule binding to one PCNA monomer. PCNA stimulates the nuclease activity without altering cleavage specificity. The C-terminal domain binds EP300; can bind simultaneously to both PCNA and EP300. Interacts with DDX11; this interaction is direct and increases flap endonuclease activity of FEN1. Interacts with WDR4; regulating its endonuclease activity. Interacts with POLB. Requires Mg(2+) as cofactor. In terms of processing, acetylated by EP300. Acetylation inhibits both endonuclease and exonuclease activity. Acetylation also reduces DNA-binding activity but does not affect interaction with PCNA or EP300. Phosphorylation upon DNA damage induces relocalization to the nuclear plasma. Phosphorylation at Ser-187 by CDK2 occurs during late S-phase and results in dissociation from PCNA. Post-translationally, methylation at Arg-192 by PRMT5 impedes Ser-187 phosphorylation and increases interaction with PCNA.

It is found in the nucleus. It localises to the nucleolus. The protein localises to the nucleoplasm. Its subcellular location is the mitochondrion. In terms of biological role, structure-specific nuclease with 5'-flap endonuclease and 5'-3' exonuclease activities involved in DNA replication and repair. During DNA replication, cleaves the 5'-overhanging flap structure that is generated by displacement synthesis when DNA polymerase encounters the 5'-end of a downstream Okazaki fragment. It enters the flap from the 5'-end and then tracks to cleave the flap base, leaving a nick for ligation. Also involved in the long patch base excision repair (LP-BER) pathway, by cleaving within the apurinic/apyrimidinic (AP) site-terminated flap. Acts as a genome stabilization factor that prevents flaps from equilibrating into structures that lead to duplications and deletions. Also possesses 5'-3' exonuclease activity on nicked or gapped double-stranded DNA, and exhibits RNase H activity. Also involved in replication and repair of rDNA and in repairing mitochondrial DNA. This Macaca fascicularis (Crab-eating macaque) protein is Flap endonuclease 1.